The primary structure comprises 277 residues: Zinc transporter ZupT (277 aa).

The next 8 helical transmembrane spans lie at valine 7–isoleucine 27, phenylalanine 38–isoleucine 58, valine 73–isoleucine 93, alanine 133–alanine 155, alanine 165–tyrosine 187, phenylalanine 196–valine 216, phenylalanine 220–isoleucine 240, and leucine 257–leucine 277. The Fe(2+) site is built by asparagine 145 and glutamate 148. Positions 148 and 173 each coordinate Zn(2+). Fe(2+)-binding residues include asparagine 174, glutamate 177, and glutamate 206. Residue glutamate 177 participates in Zn(2+) binding.

Belongs to the ZIP transporter (TC 2.A.5) family. ZupT subfamily.

The protein localises to the cell inner membrane. It catalyses the reaction Zn(2+)(in) = Zn(2+)(out). Functionally, mediates zinc uptake. May also transport other divalent cations. The chain is Zinc transporter ZupT from Nitratidesulfovibrio vulgaris (strain ATCC 29579 / DSM 644 / CCUG 34227 / NCIMB 8303 / VKM B-1760 / Hildenborough) (Desulfovibrio vulgaris).